Here is a 246-residue protein sequence, read N- to C-terminus: 2-C-methyl-D-erythritol 4-phosphate cytidylyltransferase (246 aa).

It belongs to the IspD/TarI cytidylyltransferase family. IspD subfamily.

It catalyses the reaction 2-C-methyl-D-erythritol 4-phosphate + CTP + H(+) = 4-CDP-2-C-methyl-D-erythritol + diphosphate. It participates in isoprenoid biosynthesis; isopentenyl diphosphate biosynthesis via DXP pathway; isopentenyl diphosphate from 1-deoxy-D-xylulose 5-phosphate: step 2/6. Catalyzes the formation of 4-diphosphocytidyl-2-C-methyl-D-erythritol from CTP and 2-C-methyl-D-erythritol 4-phosphate (MEP). This is 2-C-methyl-D-erythritol 4-phosphate cytidylyltransferase from Chlorobaculum parvum (strain DSM 263 / NCIMB 8327) (Chlorobium vibrioforme subsp. thiosulfatophilum).